The following is a 547-amino-acid chain: Calcium-dependent protein kinase 16 (547 aa).

The segment at 1–53 (MGNCCRSPAAAAREDVKTSHFPASTGGGKKKPHQARNGGGGGGGGGGGGWEKK) is disordered. Residue G2 is the site of N-myristoyl glycine attachment. Over residues 37–49 (NGGGGGGGGGGGG) the composition is skewed to gly residues. Residues 73–331 (YALDRELGRG…AKQVLEHTWL (259 aa)) enclose the Protein kinase domain. ATP-binding positions include 79-87 (LGRGEFGVT) and K102. The Proton acceptor role is filled by D197. Residues 337 to 367 (APNVPLGDIVKSRLKQFSRMNRFKRRALRVI) are autoinhibitory domain. EF-hand domains are found at residues 374-409 (EEVE…FGSH), 410-445 (LAES…LQRM), 446-481 (ANGE…DGAT), and 482-517 (DIME…GTDW). Positions 387, 389, 391, 398, 423, 425, 434, 459, 461, 463, 465, 470, 495, 497, 499, 501, and 506 each coordinate Ca(2+).

It belongs to the protein kinase superfamily. Ser/Thr protein kinase family. CDPK subfamily.

Its subcellular location is the membrane. The enzyme catalyses L-seryl-[protein] + ATP = O-phospho-L-seryl-[protein] + ADP + H(+). The catalysed reaction is L-threonyl-[protein] + ATP = O-phospho-L-threonyl-[protein] + ADP + H(+). Its activity is regulated as follows. Activated by calcium. Autophosphorylation may play an important role in the regulation of the kinase activity. Its function is as follows. May play a role in signal transduction pathways that involve calcium as a second messenger. The sequence is that of Calcium-dependent protein kinase 16 from Oryza sativa subsp. japonica (Rice).